Here is a 314-residue protein sequence, read N- to C-terminus: Methionyl-tRNA formyltransferase (314 aa).

112–115 lines the (6S)-5,6,7,8-tetrahydrofolate pocket; that stretch reads SLLP.

It belongs to the Fmt family.

The enzyme catalyses L-methionyl-tRNA(fMet) + (6R)-10-formyltetrahydrofolate = N-formyl-L-methionyl-tRNA(fMet) + (6S)-5,6,7,8-tetrahydrofolate + H(+). Attaches a formyl group to the free amino group of methionyl-tRNA(fMet). The formyl group appears to play a dual role in the initiator identity of N-formylmethionyl-tRNA by promoting its recognition by IF2 and preventing the misappropriation of this tRNA by the elongation apparatus. The protein is Methionyl-tRNA formyltransferase of Tolumonas auensis (strain DSM 9187 / NBRC 110442 / TA 4).